Consider the following 448-residue polypeptide: Exodeoxyribonuclease 7 large subunit (448 aa).

The protein belongs to the XseA family. Heterooligomer composed of large and small subunits.

It is found in the cytoplasm. The catalysed reaction is Exonucleolytic cleavage in either 5'- to 3'- or 3'- to 5'-direction to yield nucleoside 5'-phosphates.. Bidirectionally degrades single-stranded DNA into large acid-insoluble oligonucleotides, which are then degraded further into small acid-soluble oligonucleotides. The protein is Exodeoxyribonuclease 7 large subunit of Alcanivorax borkumensis (strain ATCC 700651 / DSM 11573 / NCIMB 13689 / SK2).